A 357-amino-acid chain; its full sequence is DNA polymerase IV (357 aa).

The 182-residue stretch at 4–185 (IIHCDCDCFY…LPVERLFGVG (182 aa)) folds into the UmuC domain. 2 residues coordinate Mg(2+): Asp8 and Asp103. The active site involves Glu104.

This sequence belongs to the DNA polymerase type-Y family. As to quaternary structure, monomer. Mg(2+) serves as cofactor.

It localises to the cytoplasm. The catalysed reaction is DNA(n) + a 2'-deoxyribonucleoside 5'-triphosphate = DNA(n+1) + diphosphate. Poorly processive, error-prone DNA polymerase involved in untargeted mutagenesis. Copies undamaged DNA at stalled replication forks, which arise in vivo from mismatched or misaligned primer ends. These misaligned primers can be extended by PolIV. Exhibits no 3'-5' exonuclease (proofreading) activity. May be involved in translesional synthesis, in conjunction with the beta clamp from PolIII. The polypeptide is DNA polymerase IV (Ralstonia nicotianae (strain ATCC BAA-1114 / GMI1000) (Ralstonia solanacearum)).